The primary structure comprises 188 residues: Segregation and condensation protein B (188 aa).

This sequence belongs to the ScpB family. Homodimer. Homodimerization may be required to stabilize the binding of ScpA to the Smc head domains. Component of a cohesin-like complex composed of ScpA, ScpB and the Smc homodimer, in which ScpA and ScpB bind to the head domain of Smc. The presence of the three proteins is required for the association of the complex with DNA.

Its subcellular location is the cytoplasm. Its function is as follows. Participates in chromosomal partition during cell division. May act via the formation of a condensin-like complex containing Smc and ScpA that pull DNA away from mid-cell into both cell halves. This Lactococcus lactis subsp. cremoris (strain MG1363) protein is Segregation and condensation protein B.